Here is a 105-residue protein sequence, read N- to C-terminus: uncharacterized protein (105 aa).

The protein to C.jejuni CJ1463.

This is an uncharacterized protein from Helicobacter pylori (strain ATCC 700392 / 26695) (Campylobacter pylori).